Here is a 258-residue protein sequence, read N- to C-terminus: Imidazole glycerol phosphate synthase subunit HisF (258 aa).

Active-site residues include Asp11 and Asp130.

It belongs to the HisA/HisF family. In terms of assembly, heterodimer of HisH and HisF.

The protein localises to the cytoplasm. The catalysed reaction is 5-[(5-phospho-1-deoxy-D-ribulos-1-ylimino)methylamino]-1-(5-phospho-beta-D-ribosyl)imidazole-4-carboxamide + L-glutamine = D-erythro-1-(imidazol-4-yl)glycerol 3-phosphate + 5-amino-1-(5-phospho-beta-D-ribosyl)imidazole-4-carboxamide + L-glutamate + H(+). Its pathway is amino-acid biosynthesis; L-histidine biosynthesis; L-histidine from 5-phospho-alpha-D-ribose 1-diphosphate: step 5/9. In terms of biological role, IGPS catalyzes the conversion of PRFAR and glutamine to IGP, AICAR and glutamate. The HisF subunit catalyzes the cyclization activity that produces IGP and AICAR from PRFAR using the ammonia provided by the HisH subunit. The sequence is that of Imidazole glycerol phosphate synthase subunit HisF from Yersinia pseudotuberculosis serotype IB (strain PB1/+).